We begin with the raw amino-acid sequence, 270 residues long: UPF0354 protein BC_4690 (270 aa).

It belongs to the UPF0354 family.

This Bacillus cereus (strain ATCC 14579 / DSM 31 / CCUG 7414 / JCM 2152 / NBRC 15305 / NCIMB 9373 / NCTC 2599 / NRRL B-3711) protein is UPF0354 protein BC_4690.